We begin with the raw amino-acid sequence, 488 residues long: NADH-quinone oxidoreductase subunit N (488 aa).

The next 14 membrane-spanning stretches (helical) occupy residues 15–35, 42–62, 79–99, 108–128, 133–153, 168–188, 209–229, 243–263, 277–297, 305–325, 333–353, 376–396, 409–429, and 456–476; these read LALP…VDLY, GMTF…AIVA, NLAA…FAYC, LLKG…MIMA, LMTV…MVAF, FVLG…IYGA, WLLL…FGAV, PTTV…ALFV, WQPM…LAAL, MLAY…IAGT, LFYA…IILL, MALM…TVGF, VGLV…AFYY, and GLLV…DSLI.

The protein belongs to the complex I subunit 2 family. NDH-1 is composed of 14 different subunits. Subunits NuoA, H, J, K, L, M, N constitute the membrane sector of the complex.

Its subcellular location is the cell inner membrane. It catalyses the reaction a quinone + NADH + 5 H(+)(in) = a quinol + NAD(+) + 4 H(+)(out). In terms of biological role, NDH-1 shuttles electrons from NADH, via FMN and iron-sulfur (Fe-S) centers, to quinones in the respiratory chain. The immediate electron acceptor for the enzyme in this species is believed to be ubiquinone. Couples the redox reaction to proton translocation (for every two electrons transferred, four hydrogen ions are translocated across the cytoplasmic membrane), and thus conserves the redox energy in a proton gradient. The chain is NADH-quinone oxidoreductase subunit N from Alkalilimnicola ehrlichii (strain ATCC BAA-1101 / DSM 17681 / MLHE-1).